The primary structure comprises 378 residues: MKLKEVTEGKVRIFVPDPKEYMIEGKFDPSWAPVFYNPKMTFNRDLSVIVVSLLKPKIILDALSATGIRGIRYYVESWKSEQLILNDKNSTAASLIQINVKNNGIENAKIFNKDANALLYEIKSEYIDIDPFGSPVPFILSSINATIRNGIAAFTATDLSPLEGSSRTSCRRKYDAINYKLSSSKELGLRILIGKIIREAATLEKTVHPLFSFYADYYYRLFVIVESGARKADENINKNLKYFGECPRCGFQTFVDENCKTKCPICGENFIIIGPLYIGPLHNMEFLKRMIDTYSDFNYLSSFNRIQKLLNVIEKEAKYKSVFYNISKLASKLKVSAIPPIDSILECLGDASKTHFAPTGIRTDKGYEEIIRCVKSLR.

One can recognise a Trm1 methyltransferase domain in the interval 4–374 (KEVTEGKVRI…KGYEEIIRCV (371 aa)). S-adenosyl-L-methionine is bound by residues Arg-44, Arg-69, Asp-87, Asp-114, and Ala-115. The Zn(2+) site is built by Cys-246, Cys-249, Cys-263, and Cys-266.

It belongs to the class I-like SAM-binding methyltransferase superfamily. Trm1 family.

The catalysed reaction is guanosine(26) in tRNA + 2 S-adenosyl-L-methionine = N(2)-dimethylguanosine(26) in tRNA + 2 S-adenosyl-L-homocysteine + 2 H(+). Functionally, dimethylates a single guanine residue at position 26 of a number of tRNAs using S-adenosyl-L-methionine as donor of the methyl groups. The polypeptide is tRNA (guanine(26)-N(2))-dimethyltransferase (Saccharolobus islandicus (strain M.16.27) (Sulfolobus islandicus)).